The sequence spans 444 residues: Exodeoxyribonuclease 7 large subunit (444 aa).

It belongs to the XseA family. Heterooligomer composed of large and small subunits.

The protein localises to the cytoplasm. It carries out the reaction Exonucleolytic cleavage in either 5'- to 3'- or 3'- to 5'-direction to yield nucleoside 5'-phosphates.. Bidirectionally degrades single-stranded DNA into large acid-insoluble oligonucleotides, which are then degraded further into small acid-soluble oligonucleotides. The protein is Exodeoxyribonuclease 7 large subunit of Xylella fastidiosa (strain M23).